The sequence spans 416 residues: CinA-like protein (416 aa).

Belongs to the CinA family.

This chain is CinA-like protein, found in Nostoc punctiforme (strain ATCC 29133 / PCC 73102).